We begin with the raw amino-acid sequence, 541 residues long: MFQDKGWILVTLITLVTPSWAAYKLQERYSWSQLDFAFPNTRLKDQALASGDYIPQNALPVGVEHFGNRLFVTVPRWRDGIPATLTYINMDRSLTGSPELIPYPDWRSNTAGDCANSITTAYRIKVDECGRLWVLDTGTVGIGNTTTNPCPYAVNVFDLTTDTRIRRYELPGVDTNPNTFIANIAVDIGKNCDDAYAYFADELGYGLIAYSWELNKSWRFSAHSYFFPDPLRGDFNVAGINFQWGEEGIFGMSLSPIRSDGYRTLYFSPLASHRQFAVSTRILRDETRTEDSYHDFVALDERGPNSHTTSRVMSDDGIELFNLIDQNAVGCWHSSMPYSPQFHGIVDRDDVGLVFPADVKIDENKNVWVLSDRMPVFLLSDLDYSDTNFRIYTAPLATLIENTVCDLRNNAYGPPNTVSIPKQAVLPMGPPLYTKQYRPVLPQKPQTSWASSPPPPSRTYLPANSGNVVSSISVSTNSVGPAGVEVPKAYIFNQHNGINYETSGPHLFPTHQPAQPGGQDGGLKTYVNARQSGWWHHQHQG.

Residues 1-21 form the signal peptide; it reads MFQDKGWILVTLITLVTPSWA. 2 N-linked (GlcNAc...) asparagine glycosylation sites follow: N144 and N215. Residues 443-463 are disordered; that stretch reads QKPQTSWASSPPPPSRTYLPA.

This sequence belongs to the major royal jelly protein family.

Its subcellular location is the secreted. Its function is as follows. Controls the pigmentation pattern of the adult cuticle and larval mouth parts. The protein is Protein yellow (y) of Drosophila melanogaster (Fruit fly).